A 142-amino-acid chain; its full sequence is Transcriptional regulator MraZ (142 aa).

2 SpoVT-AbrB domains span residues 5–48 and 77–120; these read EFEY…PLCE and AFDV…DKET.

The protein belongs to the MraZ family. Forms oligomers.

The protein localises to the cytoplasm. It localises to the nucleoid. The polypeptide is Transcriptional regulator MraZ (Dehalococcoides mccartyi (strain ATCC BAA-2266 / KCTC 15142 / 195) (Dehalococcoides ethenogenes (strain 195))).